A 90-amino-acid chain; its full sequence is UPF0237 protein BL1209.1 (90 aa).

One can recognise an ACT domain in the interval 5-79 (IITVVGQDTV…DDIGVRIRCQ (75 aa)).

The protein belongs to the UPF0237 family.

This chain is UPF0237 protein BL1209.1, found in Bifidobacterium longum (strain NCC 2705).